Reading from the N-terminus, the 527-residue chain is Peptide chain release factor 3 (527 aa).

In terms of domain architecture, tr-type G spans 9-277; sequence AKRRTFAIIS…AVVDWAPKPL (269 aa). Residues 18–25, 86–90, and 140–143 each bind GTP; these read SHPDAGKT, DTPGH, and NKLD.

Belongs to the TRAFAC class translation factor GTPase superfamily. Classic translation factor GTPase family. PrfC subfamily.

The protein resides in the cytoplasm. In terms of biological role, increases the formation of ribosomal termination complexes and stimulates activities of RF-1 and RF-2. It binds guanine nucleotides and has strong preference for UGA stop codons. It may interact directly with the ribosome. The stimulation of RF-1 and RF-2 is significantly reduced by GTP and GDP, but not by GMP. This chain is Peptide chain release factor 3, found in Stutzerimonas stutzeri (strain A1501) (Pseudomonas stutzeri).